Reading from the N-terminus, the 658-residue chain is Glycine--tRNA ligase beta subunit (658 aa).

The protein belongs to the class-II aminoacyl-tRNA synthetase family. As to quaternary structure, tetramer of two alpha and two beta subunits.

Its subcellular location is the cytoplasm. It catalyses the reaction tRNA(Gly) + glycine + ATP = glycyl-tRNA(Gly) + AMP + diphosphate. This Rickettsia bellii (strain OSU 85-389) protein is Glycine--tRNA ligase beta subunit.